Consider the following 302-residue polypeptide: Arginase (302 aa).

The Mn(2+) site is built by His-103, Asp-126, His-128, and Asp-130. Residues 128–132 (HGDLN), 139–141 (SGN), and Asp-180 each bind substrate. Mn(2+) is bound by residues Asp-229 and Asp-231. Positions 243 and 274 each coordinate substrate.

The protein belongs to the arginase family. Mn(2+) serves as cofactor.

It catalyses the reaction L-arginine + H2O = urea + L-ornithine. The protein operates within nitrogen metabolism; urea cycle; L-ornithine and urea from L-arginine: step 1/1. The sequence is that of Arginase (arg) from Staphylococcus aureus (strain MSSA476).